The primary structure comprises 133 residues: Small ribosomal subunit protein uS19 (133 aa).

This sequence belongs to the universal ribosomal protein uS19 family.

Functionally, protein S19 forms a complex with S13 that binds strongly to the 16S ribosomal RNA. In Thermococcus gammatolerans (strain DSM 15229 / JCM 11827 / EJ3), this protein is Small ribosomal subunit protein uS19.